Consider the following 106-residue polypeptide: UPF0060 membrane protein AZC_0909 (106 aa).

A run of 4 helical transmembrane segments spans residues 4 to 24 (PLFALAALAEIAGCFAFWHVV), 27 to 47 (GGSPLWLAPGVLSLVAFAALL), 58 to 78 (AFAAYGGIYILASLGWMWAAE), and 84 to 104 (RFDALGAAICLAGACVILFAP).

It belongs to the UPF0060 family.

It localises to the cell inner membrane. This chain is UPF0060 membrane protein AZC_0909, found in Azorhizobium caulinodans (strain ATCC 43989 / DSM 5975 / JCM 20966 / LMG 6465 / NBRC 14845 / NCIMB 13405 / ORS 571).